The following is a 474-amino-acid chain: Glutathione synthetase (474 aa).

Residue arginine 125 participates in substrate binding. ATP is bound at residue glutamate 144. Positions 144 and 146 each coordinate Mg(2+). Residues 148 to 151, 214 to 216, glutamine 220, and 267 to 270 each bind substrate; these read IAAS, QRN, and RTGY. ATP-binding positions include lysine 305, 364 to 373, tyrosine 375, 398 to 401, and glutamate 425; these read KPQREGGGNN and MDKI. Glutamate 368 contributes to the Mg(2+) binding site. A substrate-binding site is contributed by arginine 450. 2 residues coordinate ATP: lysine 452 and aspartate 458. Position 461 to 462 (461 to 462) interacts with substrate; that stretch reads VA.

It belongs to the eukaryotic GSH synthase family. Homodimer. Mg(2+) is required as a cofactor. As to expression, expressed ubiquitously.

The enzyme catalyses gamma-L-glutamyl-L-cysteine + glycine + ATP = glutathione + ADP + phosphate + H(+). It carries out the reaction gamma-L-glutamyl-(2S)-2-aminobutanoate + glycine + ATP = ophthalmate + ADP + phosphate + H(+). Its pathway is sulfur metabolism; glutathione biosynthesis; glutathione from L-cysteine and L-glutamate: step 2/2. Functionally, catalyzes the production of glutathione from gamma-glutamylcysteine and glycine in an ATP-dependent manner. Glutathione (gamma-glutamylcysteinylglycine, GSH) is the most abundant intracellular thiol in living aerobic cells and is required for numerous processes including the protection of cells against oxidative damage, amino acid transport, the detoxification of foreign compounds, the maintenance of protein sulfhydryl groups in a reduced state and acts as a cofactor for a number of enzymes. Participates in ophthalmate biosynthesis in hepatocytes. The protein is Glutathione synthetase of Xenopus laevis (African clawed frog).